The sequence spans 293 residues: Mimecan (293 aa).

The first 19 residues, 1 to 19 (MKTLQATFFLVAFVPLVKP), serve as a signal peptide directing secretion. The N-linked (GlcNAc...) asparagine glycan is linked to N60. LRR repeat units lie at residues 107-126 (EAVPPLPKETAYLYARFNKI), 127-150 (KRIAVSDFADITTLRRIDFSGNMI), 151-174 (EEIEDGAFSKLLLLEELSLAENRL), 175-194 (VKLPVLPPKLTTFNANQNRI), 195-220 (KSRGIKNNAFKKLTNLAYLYLGHNAL), 221-241 (ESVPLNLPESLRILHLQHNNI), and 242-272 (TTITDDTFCKSNNTRYIRTRMDEIRMEGNPI). N-linked (GlcNAc...) asparagine glycans are attached at residues N240 and N253. The cysteines at positions 250 and 283 are disulfide-linked.

The protein belongs to the small leucine-rich proteoglycan (SLRP) family. SLRP class III subfamily. In terms of processing, contains keratan sulfate. As to expression, expressed in many tissues.

It localises to the secreted. It is found in the extracellular space. The protein localises to the extracellular matrix. Functionally, induces bone formation in conjunction with TGF-beta-1 or TGF-beta-2. This chain is Mimecan (OGN), found in Coturnix japonica (Japanese quail).